The following is a 124-amino-acid chain: Small ribosomal subunit protein eS25 (124 aa).

Over residues 1-22 (PPKDDKKKKDAGKSAKKDKDPV) the composition is skewed to basic and acidic residues. Residues 1–37 (PPKDDKKKKDAGKSAKKDKDPVNKSGGKAKKKKWSKG) form a disordered region. A compositionally biased stretch (basic residues) spans 27 to 37 (GKAKKKKWSKG). K42 is modified (N6-acetyllysine). The residue at position 51 (K51) is an N6-acetyllysine; alternate. Position 51 is an N6-succinyllysine; alternate (K51). Residues K59 and K65 each carry the N6-acetyllysine modification. Residue K93 is modified to N6-acetyllysine; alternate. K93 carries the N6-succinyllysine; alternate modification.

Belongs to the eukaryotic ribosomal protein eS25 family. Component of the small ribosomal subunit.

The protein localises to the cytoplasm. In terms of biological role, component of the small ribosomal subunit. The ribosome is a large ribonucleoprotein complex responsible for the synthesis of proteins in the cell. The sequence is that of Small ribosomal subunit protein eS25 (RPS25) from Oryctolagus cuniculus (Rabbit).